Here is a 119-residue protein sequence, read N- to C-terminus: Large ribosomal subunit protein uL18 (119 aa).

Belongs to the universal ribosomal protein uL18 family. In terms of assembly, part of the 50S ribosomal subunit; part of the 5S rRNA/L5/L18/L25 subcomplex. Contacts the 5S and 23S rRNAs.

This is one of the proteins that bind and probably mediate the attachment of the 5S RNA into the large ribosomal subunit, where it forms part of the central protuberance. The protein is Large ribosomal subunit protein uL18 of Xylella fastidiosa (strain M23).